The primary structure comprises 791 residues: DNA repair and recombination protein RAD54-like (791 aa).

Positions 1 to 20 are enriched in polar residues; it reads MRRSLAPSQRIGQSTASRNA. The disordered stretch occupies residues 1–53; that stretch reads MRRSLAPSQRIGQSTASRNAFTPPLLQKKNKRACQKDLRLDTDADEDKERKRF. The tract at residues 2–9 is required for chromatin remodeling, strand pairing activities and coupling of ATPase activity; it reads RRSLAPSQ. The residue at position 22 (threonine 22) is a Phosphothreonine. A compositionally biased stretch (basic and acidic residues) spans 34–53; it reads CQKDLRLDTDADEDKERKRF. Residues 175–349 form the Helicase ATP-binding domain; the sequence is EGKKGDFNGC…FSLVNFVNPE (175 aa). ATP is bound at residue 188 to 195; it reads DEMGLGKT. Positions 300-303 match the DEGH box motif; the sequence is DEGH. The region spanning 506–663 is the Helicase C-terminal domain; sequence LLDFMLAAIR…NNESSEKHFT (158 aa). The segment at 747–791 is disordered; it reads KEVVESPESAAAEAESVEEESQPTQRKRPSPPLSDDSADEDFIGF. Positions 782–791 are enriched in acidic residues; the sequence is DSADEDFIGF.

This sequence belongs to the SNF2/RAD54 helicase family. As to quaternary structure, interacts (via N-terminus) with spn-A/Rad51.

It localises to the nucleus. In terms of biological role, involved in mitotic DNA repair and meiotic recombination. Functions in the recombinational DNA repair pathway. Essential for interhomolog gene conversion (GC), but may have a less important role in intersister GC than spn-A/Rad51. In the presence of DNA, spn-A/Rad51 enhances the ATPase activity of okr/Rad54. This Drosophila ananassae (Fruit fly) protein is DNA repair and recombination protein RAD54-like.